The following is a 509-amino-acid chain: Meiotic fizzy-related protein 2 (509 aa).

WD repeat units lie at residues leucine 159–glutamate 196, proline 199–aspartate 238, histidine 242–valine 281, valine 287–phenylalanine 326, isoleucine 329–serine 371, and isoleucine 437–histidine 477.

The protein belongs to the WD repeat CDC20/Fizzy family.

The protein resides in the nucleus. Its function is as follows. Has a role in meiosis. The polypeptide is Meiotic fizzy-related protein 2 (mfr2) (Schizosaccharomyces pombe (strain 972 / ATCC 24843) (Fission yeast)).